We begin with the raw amino-acid sequence, 116 residues long: NADH-ubiquinone oxidoreductase chain 3 (116 aa).

A run of 3 helical transmembrane segments spans residues 3–23, 56–76, and 85–105; these read LITT…TISF, FFLI…LLPL, and PALT…GLIY.

This sequence belongs to the complex I subunit 3 family.

Its subcellular location is the mitochondrion membrane. The catalysed reaction is a ubiquinone + NADH + 5 H(+)(in) = a ubiquinol + NAD(+) + 4 H(+)(out). In terms of biological role, core subunit of the mitochondrial membrane respiratory chain NADH dehydrogenase (Complex I) that is believed to belong to the minimal assembly required for catalysis. Complex I functions in the transfer of electrons from NADH to the respiratory chain. The immediate electron acceptor for the enzyme is believed to be ubiquinone. In Salmo salar (Atlantic salmon), this protein is NADH-ubiquinone oxidoreductase chain 3 (MT-ND3).